A 114-amino-acid polypeptide reads, in one-letter code: Beta-microseminoprotein E1 (114 aa).

The signal sequence occupies residues 1-20; the sequence is MNVLLGGLVIFATFVTLCNG. 5 disulfides stabilise this stretch: cysteine 22–cysteine 70, cysteine 38–cysteine 62, cysteine 57–cysteine 93, cysteine 60–cysteine 69, and cysteine 84–cysteine 107.

The protein belongs to the beta-microseminoprotein family.

The protein localises to the secreted. This chain is Beta-microseminoprotein E1 (MSPE), found in Saguinus oedipus (Cotton-top tamarin).